Reading from the N-terminus, the 515-residue chain is Histidine ammonia-lyase (515 aa).

A cross-link (5-imidazolinone (Ala-Gly)) is located at residues Ala-146–Gly-148. Residue Ser-147 is modified to 2,3-didehydroalanine (Ser).

Belongs to the PAL/histidase family. Contains an active site 4-methylidene-imidazol-5-one (MIO), which is formed autocatalytically by cyclization and dehydration of residues Ala-Ser-Gly.

Its subcellular location is the cytoplasm. The catalysed reaction is L-histidine = trans-urocanate + NH4(+). The protein operates within amino-acid degradation; L-histidine degradation into L-glutamate; N-formimidoyl-L-glutamate from L-histidine: step 1/3. The polypeptide is Histidine ammonia-lyase (hutH) (Ralstonia nicotianae (strain ATCC BAA-1114 / GMI1000) (Ralstonia solanacearum)).